A 335-amino-acid polypeptide reads, in one-letter code: Corrinoid adenosyltransferase PduO (335 aa).

Position 206 (histidine 206) interacts with heme.

This sequence belongs to the Cob(I)alamin adenosyltransferase family. PduO subfamily. In terms of assembly, forms a complex with PduS. Heme b serves as cofactor. The cofactor is Mg(2+).

It is found in the bacterial microcompartment. The enzyme catalyses cob(I)alamin-[corrinoid adenosyltransferase] + ATP = apo-[corrinoid adenosyltransferase] + adenosylcob(III)alamin + triphosphate. The protein operates within polyol metabolism; 1,2-propanediol degradation. It participates in cofactor biosynthesis; adenosylcobalamin biosynthesis. Functionally, converts cob(I)alamin to adenosylcobalamin (adenosylcob(III)alamin), the cofactor for propanediol dehydratase. Found in the bacterial microcompartment (BMC) dedicated to 1,2-propanediol (1,2-PD) degradation. PduS and PduO allow regeneration of the adenosylcobalamin cofactor within the BMC. Its function is as follows. Expression of a cosmid containing the full 21-gene pdu operon in E.coli allows E.coli to grow on 1,2-propanediol (1,2-PD) with the appearance of bacterial microcompartments (BMC) in its cytoplasm. In terms of biological role, the 1,2-PD-specific bacterial microcompartment (BMC) concentrates low levels of 1,2-PD catabolic enzymes, concentrates volatile reaction intermediates thus enhancing pathway flux and keeps the level of toxic, mutagenic propionaldehyde low. This is Corrinoid adenosyltransferase PduO from Citrobacter freundii.